The chain runs to 316 residues: L-lactate dehydrogenase 3 (316 aa).

The NAD(+) site is built by valine 16, aspartate 37, arginine 42, and tyrosine 68. Substrate is bound at residue arginine 91. NAD(+) is bound by residues serine 104, 121–123 (ASN), and threonine 146. Residue 123-126 (NPVD) participates in substrate binding. 151-154 (DSSR) provides a ligand contact to substrate. The beta-D-fructose 1,6-bisphosphate site is built by arginine 156 and histidine 171. Histidine 178 acts as the Proton acceptor in catalysis. Threonine 233 provides a ligand contact to substrate.

The protein belongs to the LDH/MDH superfamily. LDH family. In terms of assembly, homotetramer.

The protein localises to the cytoplasm. It carries out the reaction (S)-lactate + NAD(+) = pyruvate + NADH + H(+). The protein operates within fermentation; pyruvate fermentation to lactate; (S)-lactate from pyruvate: step 1/1. With respect to regulation, allosterically activated by fructose 1,6-bisphosphate (FBP). In terms of biological role, catalyzes the conversion of lactate to pyruvate. The chain is L-lactate dehydrogenase 3 from Bacillus cereus (strain ATCC 14579 / DSM 31 / CCUG 7414 / JCM 2152 / NBRC 15305 / NCIMB 9373 / NCTC 2599 / NRRL B-3711).